The sequence spans 290 residues: Signal peptidase I (290 aa).

The Cytoplasmic portion of the chain corresponds to 1–13; that stretch reads MKFLRSVYAFCSS. A helical membrane pass occupies residues 14 to 34; sequence WVGTIIIVLLVIFFIAQAFII. Over 35 to 290 the chain is Extracellular; that stretch reads PSRSMVGTLY…KIIKKEKATH (256 aa). Residues serine 38 and lysine 106 contribute to the active site.

The protein belongs to the peptidase S26 family.

Its subcellular location is the cell membrane. It carries out the reaction Cleavage of hydrophobic, N-terminal signal or leader sequences from secreted and periplasmic proteins.. The sequence is that of Signal peptidase I (lepB) from Helicobacter pylori (strain J99 / ATCC 700824) (Campylobacter pylori J99).